Here is a 370-residue protein sequence, read N- to C-terminus: MIRTVPVGLGERAYDVVIGPGLLDQAGERVAAVLGKRKRVAVVTDAHVGAHHGERLSAALQGAGITVDLITIAPGEESKSFEGLADLSDRLLALNLERGDQIVALGGGVVGDLAGFAAAIYKRGIDFVQVPTTLLAQVDSSVGGKTAIDTPRGKNLIGAFHQPRLVLADLDVLATLPARELACGYAEIIKYGLLGDFAFFEWLETNVQAVLDRDVDALVRAVGRSVEMKAEIVAEDEKEAGRRALLNLGHTFGHAIEAEMGFGEALKHGEAVGVGMAQAFRFSARLGLCPSQDAVRAQAAIKAAGLPTTLADVRPEPFSADALIAHCGQDKKAQGGKLTFVLARGIGDAFVAKDVDRAALKAFLVEEGAV.

NAD(+) is bound by residues 108–112 (GVVGD), 132–133 (TT), Lys145, and Lys154. Zn(2+) contacts are provided by Glu187, His250, and His268.

This sequence belongs to the sugar phosphate cyclases superfamily. Dehydroquinate synthase family. It depends on Co(2+) as a cofactor. The cofactor is Zn(2+). NAD(+) serves as cofactor.

The protein localises to the cytoplasm. It carries out the reaction 7-phospho-2-dehydro-3-deoxy-D-arabino-heptonate = 3-dehydroquinate + phosphate. The protein operates within metabolic intermediate biosynthesis; chorismate biosynthesis; chorismate from D-erythrose 4-phosphate and phosphoenolpyruvate: step 2/7. Its function is as follows. Catalyzes the conversion of 3-deoxy-D-arabino-heptulosonate 7-phosphate (DAHP) to dehydroquinate (DHQ). This is 3-dehydroquinate synthase from Caulobacter vibrioides (strain NA1000 / CB15N) (Caulobacter crescentus).